The following is a 162-amino-acid chain: MVKLYAILRIRGQSDTPPDVEYTLKLLRLHKKYHLVIYPAEQPGLEGMLEKVKDWVTWGEINKPTLVKLFKARGRASGGIRITDEYIAKVFAEQGIKDIEGFAEALLEGKLVLHKLENIVKPVFRLHPPRGGFDGSSKKPFNMKGELGYRGEKINELIERML.

Belongs to the universal ribosomal protein uL30 family. Part of the 50S ribosomal subunit.

The chain is Large ribosomal subunit protein uL30 from Desulfurococcus amylolyticus (strain DSM 18924 / JCM 16383 / VKM B-2413 / 1221n) (Desulfurococcus kamchatkensis).